Consider the following 502-residue polypeptide: Maturase K (502 aa).

Belongs to the intron maturase 2 family. MatK subfamily.

The protein resides in the plastid. Its subcellular location is the chloroplast. In terms of biological role, usually encoded in the trnK tRNA gene intron. Probably assists in splicing its own and other chloroplast group II introns. The chain is Maturase K from Stanleya pinnata (Prince's plume).